We begin with the raw amino-acid sequence, 422 residues long: MEKNEKIHADMQALGRAACAAARIVAKADTATKNHALAMMARAIRRDEALLLAANAKDVAQARNKGLESAMIDRLTLTSRGVVSMATGLEQIATLPDPIGAMTDLDYRPSGIQVGKMRVPLGVIGIIYEARPNVTADAAGLCLKAGNAAILRGGSEAIQSNQAIAICVREGLRSAGLPEQTMQVVETTDRAAVSALITMSEYVDVIVPRGGKGLIERITNEARVPVIKHLDGVCHVYVDLSADLEKAVRVADNAKTQRYGTCNTMETLLVHTGIAEQFLPRICQIFLEKEVELRGDEAACALVSRMKPAVEEDWYAEYLAPILSVRIVADIDEAITHIATYGSQHTDTIVTENYSRARQFLREVDSSSVMVNASTRFADGFEYGLGAEIGISTDKLHARGPVGLEGLTSQKFIVLGDGHIRE.

This sequence belongs to the gamma-glutamyl phosphate reductase family.

Its subcellular location is the cytoplasm. The catalysed reaction is L-glutamate 5-semialdehyde + phosphate + NADP(+) = L-glutamyl 5-phosphate + NADPH + H(+). It participates in amino-acid biosynthesis; L-proline biosynthesis; L-glutamate 5-semialdehyde from L-glutamate: step 2/2. Its function is as follows. Catalyzes the NADPH-dependent reduction of L-glutamate 5-phosphate into L-glutamate 5-semialdehyde and phosphate. The product spontaneously undergoes cyclization to form 1-pyrroline-5-carboxylate. This Nitrosomonas eutropha (strain DSM 101675 / C91 / Nm57) protein is Gamma-glutamyl phosphate reductase.